A 95-amino-acid polypeptide reads, in one-letter code: Large ribosomal subunit protein bL25 (95 aa).

Belongs to the bacterial ribosomal protein bL25 family. In terms of assembly, part of the 50S ribosomal subunit; part of the 5S rRNA/L5/L18/L25 subcomplex. Contacts the 5S rRNA. Binds to the 5S rRNA independently of L5 and L18.

This is one of the proteins that binds to the 5S RNA in the ribosome where it forms part of the central protuberance. The polypeptide is Large ribosomal subunit protein bL25 (Mannheimia succiniciproducens (strain KCTC 0769BP / MBEL55E)).